A 505-amino-acid chain; its full sequence is MYKKRKLAILIALLTGTAAAHGQTDLNSIEARLAALEKRLQDAETRASTAESRAASAEQKVQQLTQQQQQTQATTQQVARRTTQLEEKAERPGGFEFHGYARSGVIMNDSAASTKSGAYMTPAGETGGAIGRLGNQADTYVEMNLEHKQTLDNGATTRFKVMVADGQTTYNDWTASSSDLNVRQAFVELGNLPTFEGPFKGSTLWAGKRFDRDNFDIHWIDSDVVFLAGTGGGIYDVKWNDSLRSNFSLYGRNFGDIADSSNSVQNYIVSMNNFAGPVQMMVSGMRAKDNDDRQDANGNLVKGDAANTGVHALLGLHNESFYGLRDGTSKTALLYGHGLGAEVKGIGSDGALRPGANTWRFASYGTTPLSDRWFIAPAVLAQSSKDRYVDGDSYQWATLNLRLIQEVTQNFALAWEGSYQYMDLQPEGYNDRHAVNGSFYKLTFAPTFKVGSIGDFFSRPEIRFYTSWMDWSKKLDNYANDDALGSNGFKSGGEWSFGMQMETWF.

A signal peptide spans 1 to 22 (MYKKRKLAILIALLTGTAAAHG). Positions 44–94 (ETRASTAESRAASAEQKVQQLTQQQQQTQATTQQVARRTTQLEEKAERPGG) are disordered. Over residues 46-82 (RASTAESRAASAEQKVQQLTQQQQQTQATTQQVARRT) the composition is skewed to low complexity. Positions 83–93 (TQLEEKAERPG) are enriched in basic and acidic residues.

This sequence belongs to the porin LamB (TC 1.B.3) family. Homotrimer.

The protein resides in the cell outer membrane. Its function is as follows. Porin for sucrose uptake. The chain is Sucrose porin (scrY) from Klebsiella pneumoniae.